Consider the following 66-residue polypeptide: MQTGTVKWFNSEKGFGFIEVEGGDDVFVHFSAIEGEGFKTLDEGQSVEFEIVEGQRGPQAEKVTKL.

Residues 4–63 enclose the CSD domain; that stretch reads GTVKWFNSEKGFGFIEVEGGDDVFVHFSAIEGEGFKTLDEGQSVEFEIVEGQRGPQAEKV.

Homodimer.

The protein localises to the cytoplasm. The polypeptide is Cold shock-like protein CspLB (cspLB) (Listeria monocytogenes serovar 1/2a (strain ATCC BAA-679 / EGD-e)).